A 515-amino-acid chain; its full sequence is Sterol 14-alpha demethylase cyp51A (515 aa).

The chain crosses the membrane as a helical span at residues 7-29 (LTAYMAVAVLTAILLNVVYQLFF). N-linked (GlcNAc...) asparagine glycosylation is found at Asn-33 and Asn-269. Cys-454 contributes to the heme binding site. Residue Asn-512 is glycosylated (N-linked (GlcNAc...) asparagine).

Belongs to the cytochrome P450 family. Requires heme as cofactor.

The protein localises to the endoplasmic reticulum membrane. It carries out the reaction a 14alpha-methyl steroid + 3 reduced [NADPH--hemoprotein reductase] + 3 O2 = a Delta(14) steroid + formate + 3 oxidized [NADPH--hemoprotein reductase] + 4 H2O + 4 H(+). It catalyses the reaction a 14alpha-methyl steroid + reduced [NADPH--hemoprotein reductase] + O2 = a 14alpha-hydroxymethyl steroid + oxidized [NADPH--hemoprotein reductase] + H2O + H(+). The catalysed reaction is a 14alpha-hydroxymethyl steroid + reduced [NADPH--hemoprotein reductase] + O2 = a 14alpha-formyl steroid + oxidized [NADPH--hemoprotein reductase] + 2 H2O + H(+). The enzyme catalyses a 14alpha-formyl steroid + reduced [NADPH--hemoprotein reductase] + O2 = a Delta(14) steroid + formate + oxidized [NADPH--hemoprotein reductase] + H2O + 2 H(+). It carries out the reaction lanosterol + 3 reduced [NADPH--hemoprotein reductase] + 3 O2 = 4,4-dimethyl-5alpha-cholesta-8,14,24-trien-3beta-ol + formate + 3 oxidized [NADPH--hemoprotein reductase] + 4 H2O + 4 H(+). It catalyses the reaction lanosterol + reduced [NADPH--hemoprotein reductase] + O2 = 32-hydroxylanosterol + oxidized [NADPH--hemoprotein reductase] + H2O + H(+). The catalysed reaction is 32-hydroxylanosterol + reduced [NADPH--hemoprotein reductase] + O2 = 32-oxolanosterol + oxidized [NADPH--hemoprotein reductase] + 2 H2O + H(+). The enzyme catalyses 32-oxolanosterol + reduced [NADPH--hemoprotein reductase] + O2 = 4,4-dimethyl-5alpha-cholesta-8,14,24-trien-3beta-ol + formate + oxidized [NADPH--hemoprotein reductase] + H2O + 2 H(+). It carries out the reaction eburicol + 3 reduced [NADPH--hemoprotein reductase] + 3 O2 = 14-demethyleburicol + formate + 3 oxidized [NADPH--hemoprotein reductase] + 4 H2O + 4 H(+). It catalyses the reaction eburicol + reduced [NADPH--hemoprotein reductase] + O2 = 32-hydroxyeburicol + oxidized [NADPH--hemoprotein reductase] + H2O + H(+). The catalysed reaction is 32-hydroxyeburicol + reduced [NADPH--hemoprotein reductase] + O2 = 32-oxoeburicol + oxidized [NADPH--hemoprotein reductase] + 2 H2O + H(+). The enzyme catalyses 32-oxoeburicol + reduced [NADPH--hemoprotein reductase] + O2 = 14-demethyleburicol + formate + oxidized [NADPH--hemoprotein reductase] + H2O + 2 H(+). It functions in the pathway steroid metabolism; ergosterol biosynthesis. With respect to regulation, the sterol 14-alpha demethylase activity is inhibited by azole compounds. Activity is inhibited by the novel and long-acting fungicidal azole, PC1244. Sterol 14alpha-demethylase, encoded by cyp51A and cyp51B, that plays a critical role in the third module of ergosterol biosynthesis pathway, being ergosterol the major sterol component in fungal membranes that participates in a variety of functions. The third module or late pathway involves the ergosterol synthesis itself through consecutive reactions that mainly occur in the endoplasmic reticulum (ER) membrane. In filamentous fungi, during the initial step of this module, lanosterol (lanosta-8,24-dien-3beta-ol) can be metabolized to eburicol. Sterol 14alpha-demethylase catalyzes the three-step oxidative removal of the 14alpha-methyl group (C-32) of both these sterols in the form of formate, and converts eburicol and lanosterol to 14-demethyleburicol (4,4,24-trimethylergosta-8,14,24(28)-trienol) and 4,4-dimethyl-5alpha-cholesta-8,14,24-trien-3beta-ol, respectively, which are further metabolized by other enzymes in the pathway to ergosterol. Can also use substrates not intrinsic to fungi, such as 24,25-dihydrolanosterol (DHL), producing 4,4'-dimethyl-8,14-cholestadien-3-beta-ol, but at lower rates than the endogenous substrates. Its function is as follows. As a target of azole drugs, plays a crucial role in azole susceptibility. The sequence is that of Sterol 14-alpha demethylase cyp51A from Aspergillus fumigatus (strain ATCC MYA-4609 / CBS 101355 / FGSC A1100 / Af293) (Neosartorya fumigata).